The chain runs to 176 residues: Transcription factor E (176 aa).

The HTH TFE/IIEalpha-type domain occupies 8-90; sequence NDPVIQKYLH…LWTFHYENIP (83 aa).

It belongs to the TFE family. In terms of assembly, monomer. Interaction with RNA polymerase subunits RpoF and RpoE is necessary for Tfe stimulatory transcription activity. Able to interact with Tbp and RNA polymerase in the absence of DNA promoter. Interacts both with the preinitiation and elongation complexes.

Its function is as follows. Transcription factor that plays a role in the activation of archaeal genes transcribed by RNA polymerase. Facilitates transcription initiation by enhancing TATA-box recognition by TATA-box-binding protein (Tbp), and transcription factor B (Tfb) and RNA polymerase recruitment. Not absolutely required for transcription in vitro, but particularly important in cases where Tbp or Tfb function is not optimal. It dynamically alters the nucleic acid-binding properties of RNA polymerases by stabilizing the initiation complex and destabilizing elongation complexes. Seems to translocate with the RNA polymerase following initiation and acts by binding to the non template strand of the transcription bubble in elongation complexes. This Haloquadratum walsbyi (strain DSM 16790 / HBSQ001) protein is Transcription factor E.